The sequence spans 215 residues: Uracil phosphoribosyltransferase (215 aa).

30–34 (KGMVR) is a GTP binding site. Residues Arg80, Arg105, and 139-147 (DPMIATAST) each bind 5-phospho-alpha-D-ribose 1-diphosphate. Uracil contacts are provided by residues Ile202 and 207 to 209 (GDA). Asp208 provides a ligand contact to 5-phospho-alpha-D-ribose 1-diphosphate.

The protein belongs to the UPRTase family. Mg(2+) is required as a cofactor.

The catalysed reaction is UMP + diphosphate = 5-phospho-alpha-D-ribose 1-diphosphate + uracil. Its pathway is pyrimidine metabolism; UMP biosynthesis via salvage pathway; UMP from uracil: step 1/1. Allosterically activated by GTP. In terms of biological role, catalyzes the conversion of uracil and 5-phospho-alpha-D-ribose 1-diphosphate (PRPP) to UMP and diphosphate. This is Uracil phosphoribosyltransferase from Metallosphaera sedula (strain ATCC 51363 / DSM 5348 / JCM 9185 / NBRC 15509 / TH2).